Consider the following 824-residue polypeptide: LPS-assembly protein LptD (824 aa).

2 disordered regions span residues 1-26 and 67-117; these read MTEQ…RRVR and TQTP…PAYV. An N-terminal signal peptide occupies residues 1–48; it reads MTEQRRSPHHPATRPPAPPGTSRRVRLPASALRPLVLAMAGLTVSAHA. Over residues 98–115 the composition is skewed to low complexity; it reads NTLNLSPSSTPSNPNAPA.

This sequence belongs to the LptD family. As to quaternary structure, component of the lipopolysaccharide transport and assembly complex. Interacts with LptE and LptA.

It is found in the cell outer membrane. Functionally, together with LptE, is involved in the assembly of lipopolysaccharide (LPS) at the surface of the outer membrane. In Cupriavidus metallidurans (strain ATCC 43123 / DSM 2839 / NBRC 102507 / CH34) (Ralstonia metallidurans), this protein is LPS-assembly protein LptD.